A 443-amino-acid polypeptide reads, in one-letter code: Ribosomal protein uS12 methylthiotransferase RimO (443 aa).

An MTTase N-terminal domain is found at 1-116; that stretch reads MKFHLISLGC…IAEYVGKLIA (116 aa). [4Fe-4S] cluster-binding residues include cysteine 10, cysteine 45, cysteine 79, cysteine 154, cysteine 158, and cysteine 161. The Radical SAM core domain maps to 140–370; that stretch reads STPFFRAWVK…LELQQELSTE (231 aa). One can recognise a TRAM domain in the interval 373-441; the sequence is KKYVGTVQKV…QYDLVGGVVS (69 aa).

This sequence belongs to the methylthiotransferase family. RimO subfamily. [4Fe-4S] cluster serves as cofactor.

It is found in the cytoplasm. The catalysed reaction is L-aspartate(89)-[ribosomal protein uS12]-hydrogen + (sulfur carrier)-SH + AH2 + 2 S-adenosyl-L-methionine = 3-methylsulfanyl-L-aspartate(89)-[ribosomal protein uS12]-hydrogen + (sulfur carrier)-H + 5'-deoxyadenosine + L-methionine + A + S-adenosyl-L-homocysteine + 2 H(+). Its function is as follows. Catalyzes the methylthiolation of an aspartic acid residue of ribosomal protein uS12. The protein is Ribosomal protein uS12 methylthiotransferase RimO of Desulfotalea psychrophila (strain LSv54 / DSM 12343).